Reading from the N-terminus, the 205-residue chain is High frequency lysogenization protein HflD homolog (205 aa).

Belongs to the HflD family.

It is found in the cytoplasm. The protein localises to the cell inner membrane. The chain is High frequency lysogenization protein HflD homolog from Vibrio vulnificus (strain CMCP6).